Reading from the N-terminus, the 373-residue chain is MSEKKINLLDLDRKGLRALFTEMGEKPFRADQLMKWIYHFGVSDFEEMTNINKVLRSKLAERCVIVAPEIASFQKSADGTIKFAINVGQGQEVETVYIPEDDRATLCVSSQVGCALECTFCSTGQQGFNRNLTVSEIVGQIWRVAQFLGFVKTTGERPITNVVMMGMGEPLLNLKNVIPAMDIMLDDFGFSLSKRRVTLSTSGVVPALDILGDSIDVALAVSIHAPNDELRDILVPVNKKYPLAEFLGGIRRYIAKSNANRGRVTVEYVMLDHINDSTEQAHELAKLMKDTPCKVNLIPFNPYPGSPYGRSSNSRIDRFSKVLMEYGFTVIVRKTRGDDIDAACGQLAGDIRDRTKRLAKKRMQENQISVTMD.

Glutamate 94 acts as the Proton acceptor in catalysis. The 240-residue stretch at 100 to 339 (EDDRATLCVS…VIVRKTRGDD (240 aa)) folds into the Radical SAM core domain. An intrachain disulfide couples cysteine 107 to cysteine 344. 3 residues coordinate [4Fe-4S] cluster: cysteine 114, cysteine 118, and cysteine 121. S-adenosyl-L-methionine contacts are provided by residues 168 to 169 (GE), serine 200, 222 to 224 (SIH), and asparagine 301. The active-site S-methylcysteine intermediate is cysteine 344.

Belongs to the radical SAM superfamily. RlmN family. Requires [4Fe-4S] cluster as cofactor.

It localises to the cytoplasm. It carries out the reaction adenosine(2503) in 23S rRNA + 2 reduced [2Fe-2S]-[ferredoxin] + 2 S-adenosyl-L-methionine = 2-methyladenosine(2503) in 23S rRNA + 5'-deoxyadenosine + L-methionine + 2 oxidized [2Fe-2S]-[ferredoxin] + S-adenosyl-L-homocysteine. The enzyme catalyses adenosine(37) in tRNA + 2 reduced [2Fe-2S]-[ferredoxin] + 2 S-adenosyl-L-methionine = 2-methyladenosine(37) in tRNA + 5'-deoxyadenosine + L-methionine + 2 oxidized [2Fe-2S]-[ferredoxin] + S-adenosyl-L-homocysteine. In terms of biological role, specifically methylates position 2 of adenine 2503 in 23S rRNA and position 2 of adenine 37 in tRNAs. m2A2503 modification seems to play a crucial role in the proofreading step occurring at the peptidyl transferase center and thus would serve to optimize ribosomal fidelity. This Shewanella denitrificans (strain OS217 / ATCC BAA-1090 / DSM 15013) protein is Dual-specificity RNA methyltransferase RlmN.